The chain runs to 252 residues: tRNA (guanine-N(1)-)-methyltransferase (252 aa).

S-adenosyl-L-methionine is bound by residues Gly118 and 138-143; that span reads IGDYVL.

It belongs to the RNA methyltransferase TrmD family. Homodimer.

It localises to the cytoplasm. The enzyme catalyses guanosine(37) in tRNA + S-adenosyl-L-methionine = N(1)-methylguanosine(37) in tRNA + S-adenosyl-L-homocysteine + H(+). Its function is as follows. Specifically methylates guanosine-37 in various tRNAs. This is tRNA (guanine-N(1)-)-methyltransferase from Pseudomonas aeruginosa (strain UCBPP-PA14).